A 516-amino-acid polypeptide reads, in one-letter code: Histone H4 transcription factor (516 aa).

3 C2H2-type zinc fingers span residues 15 to 39, 127 to 151, and 167 to 191; these read LQCE…VTQH, FLCL…VEAH, and VLCG…LRSH. Residues 197 to 219 form a C2H2-type 4; degenerate zinc finger; that stretch reads VACPTCGGMFANNTKFLDHIRRQ. 5 C2H2-type zinc fingers span residues 227–249, 253–276, 282–304, 310–335, and 343–366; these read FQCS…MRNH, YKCP…RFRH, FKCD…LDTH, YSCD…RKVH, and YRCH…RKKH. The tract at residues 371–516 is interaction with NPAT; sequence PSGHPRFRYK…AAEEPEVQMV (146 aa). Residues 372 to 405 are required for activation of histone H4 transcription and contributes to DNA-binding; sequence SGHPRFRYKEHEDGYMRLQLVRYESVELTQQLLR. 2 disordered regions span residues 429–456 and 486–516; these read TVPG…PASQ and PGEP…VQMV. Acidic residues predominate over residues 436–445; that stretch reads PQEEAEEEGG.

As to quaternary structure, binds MBD2 and a histone deacetylase complex. Interacts with NPAT. Ubiquitinated. Ubiquitination may lead to proteasome-mediated degradation.

It localises to the nucleus. Its function is as follows. Transcriptional repressor that binds to the consensus sequence 5'-CGGACGTT-3' and to the RB1 promoter. Transcriptional activator that promotes histone H4 gene transcription at the G1/S phase transition in conjunction with NPAT. Also activates transcription of the ATM and PRKDC genes. Autoregulates its expression by associating with its own promoter. This is Histone H4 transcription factor (HINFP) from Bos taurus (Bovine).